A 414-amino-acid chain; its full sequence is Putative competence-damage inducible protein (414 aa).

It belongs to the CinA family.

This is Putative competence-damage inducible protein from Geobacillus kaustophilus (strain HTA426).